The following is a 116-amino-acid chain: Large ribosomal subunit protein uL18 (116 aa).

Belongs to the universal ribosomal protein uL18 family. In terms of assembly, part of the 50S ribosomal subunit; part of the 5S rRNA/L5/L18/L25 subcomplex. Contacts the 5S and 23S rRNAs.

In terms of biological role, this is one of the proteins that bind and probably mediate the attachment of the 5S RNA into the large ribosomal subunit, where it forms part of the central protuberance. This chain is Large ribosomal subunit protein uL18, found in Acinetobacter baumannii (strain AB307-0294).